The primary structure comprises 320 residues: Nodulation efficiency protein NfeD (320 aa).

Belongs to the ornithine cyclodeaminase/mu-crystallin family.

In terms of biological role, seems to be involved in the nodulation efficiency of R.meliloti GR4 on alfalfa roots. The sequence is that of Nodulation efficiency protein NfeD from Rhizobium meliloti (Ensifer meliloti).